A 452-amino-acid polypeptide reads, in one-letter code: MSVMQFSGLLVVWLLSTLFIATLTWFEFRRVRFNFNVFFSLLFLLTFFFGFPLTSVLVFRFDVGVAPPEILLQALLSAACFYGVYYVTYKTRLRKRVVDVPRKPLFTMNRVETHLTWVILMGIALVSVAIFFMHNGFLLFRLHSYSQIFSSEVSGVALKRFFYFFIPAMLVVYFLRQDSKAWLFFLVSTVAFGLLTYMIVGGTRANIIIAFAIFLFIGIIRGWISLWMLAAAGVLGIVGMFWLALKRYGLNVSGDEAFYTFLYLTRDTFSPWENLALLLQNYHNIEFQGLAPIVRDFYVFIPTWLWPGRPSIVLNSANYFTWEVLNNHSGLAISPTLIGSLVVMGGALFIPLGAIVVGLIIKWFDWLYELGNREPNRYKAAILHSFCFGAIFNMIVLAREGLDSFVSRVVFFLVVFGASLLVAKLLFWLFDSAGLIHKRTTSLPQAQVEGKL.

11 helical membrane-spanning segments follow: residues 6-26, 37-57, 63-83, 118-138, 155-175, 181-201, 207-227, 228-248, 341-361, 378-398, and 410-430; these read FSGLLVVWLLSTLFIATLTWF, VFFSLLFLLTFFFGFPLTSVL, VGVAPPEILLQALLSAACFYG, VILMGIALVSVAIFFMHNGFL, GVALKRFFYFFIPAMLVVYFL, AWLFFLVSTVAFGLLTYMIVG, IIIAFAIFLFIGIIRGWISLW, MLAAAGVLGIVGMFWLALKRY, LVVMGGALFIPLGAIVVGLII, YKAAILHSFCFGAIFNMIVLA, and VFFLVVFGASLLVAKLLFWLF.

The protein belongs to the WzyE family. As to quaternary structure, probably part of a complex composed of WzxE, WzyE and WzzE.

The protein resides in the cell inner membrane. Its pathway is bacterial outer membrane biogenesis; enterobacterial common antigen biosynthesis. In terms of biological role, probably involved in the polymerization of enterobacterial common antigen (ECA) trisaccharide repeat units. The polypeptide is Probable ECA polymerase (Salmonella choleraesuis (strain SC-B67)).